The primary structure comprises 238 residues: Endonuclease V (238 aa).

Mg(2+) is bound by residues aspartate 46 and aspartate 116.

Belongs to the endonuclease V family. The cofactor is Mg(2+).

The protein resides in the cytoplasm. It carries out the reaction Endonucleolytic cleavage at apurinic or apyrimidinic sites to products with a 5'-phosphate.. Its function is as follows. DNA repair enzyme involved in the repair of deaminated bases. Selectively cleaves double-stranded DNA at the second phosphodiester bond 3' to a deoxyinosine leaving behind the intact lesion on the nicked DNA. This chain is Endonuclease V, found in Bacillus velezensis (strain DSM 23117 / BGSC 10A6 / LMG 26770 / FZB42) (Bacillus amyloliquefaciens subsp. plantarum).